Here is a 162-residue protein sequence, read N- to C-terminus: Caveolin-2 (162 aa).

The Cytoplasmic portion of the chain corresponds to 1–86 (MGLETEKADV…FEISKYVMYK (86 aa)). Tyrosine 19 carries the post-translational modification Phosphotyrosine; by SRC. Residues serine 20 and serine 23 each carry the phosphoserine modification. Tyrosine 27 is modified (phosphotyrosine; by SRC). Serine 36 carries the post-translational modification Phosphoserine. An intramembrane region (helical) is located at residues 87–107 (FLTVFLSIPLAFLAGILFATL). Over 108–162 (SCLHIWIIMPFVKTCLMVLPSVQTIWKSVTDAIIAPLCTSIGRSFSSVSLQLSHD) the chain is Cytoplasmic.

It belongs to the caveolin family. In terms of assembly, monomer or homodimer. Interacts with CAV1; the interaction forms a stable heterooligomeric complex that is required for targeting to lipid rafts and for caveolae formation. Tyrosine phosphorylated forms do not form heterooligomers with the Tyr-19-phosphorylated form existing as a monomer or dimer, and the Tyr-27-form as a monomer only. Interacts (tyrosine phosphorylated form) with the SH2 domain-containing proteins, RASA1, NCK1 and SRC. Interacts (tyrosine phosphorylated form) with INSR, the interaction (Tyr-27-phosphorylated form) is increased on insulin stimulation. Interacts (Tyr-19 phosphorylated form) with MAPK1 (phosphorylated form); the interaction, promoted by insulin, leads to nuclear location and MAPK1 activation. Interacts with STAT3; the interaction is increased on insulin-induced tyrosine phosphorylation leading to STAT activation. Post-translationally, phosphorylated on serine and tyrosine residues. CAV1 promotes phosphorylation on Ser-23 which then targets the complex to the plasma membrane, lipid rafts and caveolae. Phosphorylation on Ser-36 appears to modulate mitosis in endothelial cells. Phosphorylation on both Tyr-19 and Tyr-27 is required for insulin-induced 'Ser-727' phosphorylation of STAT3 and its activation. Phosphorylation on Tyr-19 is required for insulin-induced phosphorylation of MAPK1 and DNA binding of STAT3. Tyrosine phosphorylation is induced by both EGF and insulin (By. similarity).

It localises to the nucleus. It is found in the cytoplasm. Its subcellular location is the golgi apparatus membrane. The protein resides in the cell membrane. The protein localises to the membrane. It localises to the caveola. May act as a scaffolding protein within caveolar membranes. Interacts directly with G-protein alpha subunits and can functionally regulate their activity. Acts as an accessory protein in conjunction with CAV1 in targeting to lipid rafts and driving caveolae formation. The Ser-36 phosphorylated form has a role in modulating mitosis in endothelial cells. Positive regulator of cellular mitogenesis of the MAPK signaling pathway. Required for the insulin-stimulated nuclear translocation and activation of MAPK1 and STAT3, and the subsequent regulation of cell cycle progression. In Saimiri boliviensis boliviensis (Bolivian squirrel monkey), this protein is Caveolin-2 (CAV2).